Consider the following 327-residue polypeptide: 4-hydroxy-2-oxoglutarate aldolase, mitochondrial (327 aa).

A mitochondrion-targeting transit peptide spans 1–25 (MLVPRVWSSVRLGLSRVLSRTLRGW). 77–78 (SN) serves as a coordination point for substrate. Lysine 196 acts as the Schiff-base intermediate with substrate in catalysis. Substrate is bound by residues serine 198 and glycine 222.

This sequence belongs to the DapA family. As to quaternary structure, homotetramer.

The protein localises to the mitochondrion. The catalysed reaction is (4S)-4-hydroxy-2-oxoglutarate = glyoxylate + pyruvate. It carries out the reaction (4R)-4-hydroxy-2-oxoglutarate = glyoxylate + pyruvate. Inhibited by divalent cations. In terms of biological role, catalyzes the final step in the metabolic pathway of hydroxyproline. This chain is 4-hydroxy-2-oxoglutarate aldolase, mitochondrial (HOGA1), found in Bos taurus (Bovine).